Consider the following 662-residue polypeptide: DNA topoisomerase 4 subunit B (662 aa).

Residues Tyr20, Asn60, Asp87, 129–135, and Lys359 each bind ATP; that span reads GLHGVGV. The region spanning 439–553 is the Toprim domain; that stretch reads TELFIVEGDS…DGHLYLAKPP (115 aa). Mg(2+)-binding residues include Glu445, Asp518, and Asp520.

Belongs to the type II topoisomerase family. ParE type 1 subfamily. Heterotetramer composed of ParC and ParE. Requires Mg(2+) as cofactor. Mn(2+) is required as a cofactor. The cofactor is Ca(2+).

It catalyses the reaction ATP-dependent breakage, passage and rejoining of double-stranded DNA.. Its function is as follows. Topoisomerase IV is essential for chromosome segregation. It relaxes supercoiled DNA. Performs the decatenation events required during the replication of a circular DNA molecule. This Rickettsia bellii (strain RML369-C) protein is DNA topoisomerase 4 subunit B.